Here is a 451-residue protein sequence, read N- to C-terminus: Tubulin alpha-1 chain (451 aa).

A GTP-binding site is contributed by Q11. N6-acetyllysine is present on K40. The GTP site is built by E71, G144, T145, T179, N206, and N228. Position 71 (E71) interacts with Mg(2+). Residue E254 is part of the active site.

Belongs to the tubulin family. As to quaternary structure, dimer of alpha and beta chains. A typical microtubule is a hollow water-filled tube with an outer diameter of 25 nm and an inner diameter of 15 nM. Alpha-beta heterodimers associate head-to-tail to form protofilaments running lengthwise along the microtubule wall with the beta-tubulin subunit facing the microtubule plus end conferring a structural polarity. Microtubules usually have 13 protofilaments but different protofilament numbers can be found in some organisms and specialized cells. Requires Mg(2+) as cofactor. Post-translationally, undergoes a tyrosination/detyrosination cycle, the cyclic removal and re-addition of a C-terminal tyrosine residue by the enzymes tubulin tyrosine carboxypeptidase (TTCP) and tubulin tyrosine ligase (TTL), respectively. Acetylation of alpha chains at Lys-40 stabilizes microtubules and affects affinity and processivity of microtubule motors. This modification has a role in multiple cellular functions, ranging from cell motility, cell cycle progression or cell differentiation to intracellular trafficking and signaling.

It localises to the cytoplasm. The protein localises to the cytoskeleton. The enzyme catalyses GTP + H2O = GDP + phosphate + H(+). In terms of biological role, tubulin is the major constituent of microtubules, a cylinder consisting of laterally associated linear protofilaments composed of alpha- and beta-tubulin heterodimers. Microtubules grow by the addition of GTP-tubulin dimers to the microtubule end, where a stabilizing cap forms. Below the cap, tubulin dimers are in GDP-bound state, owing to GTPase activity of alpha-tubulin. This is Tubulin alpha-1 chain (TUBA1) from Chlamydomonas reinhardtii (Chlamydomonas smithii).